Reading from the N-terminus, the 109-residue chain is Putative double-stranded DNA mimic protein YciU (109 aa).

It belongs to the putative dsDNA mimic protein family.

Its function is as follows. May act as a double-stranded DNA (dsDNA) mimic. Probably regulates the activity of a dsDNA-binding protein. The chain is Putative double-stranded DNA mimic protein YciU from Salmonella choleraesuis (strain SC-B67).